A 295-amino-acid polypeptide reads, in one-letter code: Aquaporin-9 (295 aa).

Residues M1–K24 are Cytoplasmic-facing. The helical transmembrane segment at E25–S43 threads the bilayer. Over I44–I57 the chain is Extracellular. A helical transmembrane segment spans residues I58–G77. Residues V78–S79 lie on the Cytoplasmic side of the membrane. An intramembrane region (discontinuously helical) is located at residues G80–C92. Positions N84–A86 match the NPA 1 motif. At T93 to E98 the chain is on the cytoplasmic side. Residues W99–I123 form a helical membrane-spanning segment. Topologically, residues Y124–G160 are extracellular. Residues A161–A178 form a helical membrane-spanning segment. The Cytoplasmic portion of the chain corresponds to I179–G190. Residues L191 to L207 traverse the membrane as a helical segment. The Extracellular portion of the chain corresponds to G208–N210. The discontinuously helical intramembrane region spans S211–L225. An NPA 2 motif is present at residues N216–A218. Residues F226–F243 are Extracellular-facing. The chain crosses the membrane as a helical span at residues W244 to L264. Topologically, residues F265–M295 are cytoplasmic.

This sequence belongs to the MIP/aquaporin (TC 1.A.8) family. Homotetramer; each monomer provides an independent glycerol/water pore.

It is found in the cell membrane. It localises to the basolateral cell membrane. The catalysed reaction is glycerol(in) = glycerol(out). The enzyme catalyses H2O(in) = H2O(out). It catalyses the reaction urea(in) = urea(out). It carries out the reaction (S)-lactate(in) = (S)-lactate(out). The catalysed reaction is NH4(+)(in) = NH4(+)(out). The enzyme catalyses uracil(in) = uracil(out). It catalyses the reaction adenine(out) = adenine(in). It carries out the reaction 3-hydroxybutanoate(in) = 3-hydroxybutanoate(out). The catalysed reaction is D-sorbitol(in) = D-sorbitol(out). The enzyme catalyses D-mannitol(in) = D-mannitol(out). It catalyses the reaction H2O2(out) = H2O2(in). It carries out the reaction arsenite(in) = arsenite(out). The catalysed reaction is selenite(in) = selenite(out). In terms of biological role, aquaglyceroporins form homotetrameric transmembrane channels, with each monomer independently mediating glycerol and water transport across the plasma membrane along their osmotic gradient. AQP9 is the primary route for glycerol uptake in hepatocytes, supporting hepatic gluconeogenesis. It exhibits broad specificity and may transport various small, non-charged solutes, including carbamides, polyols, purines, and pyrimidines. AQP9 may also facilitate hepatic urea extrusion. Due to its permeability to lactate, AQP9 might participate in the astrocyte-to-neuron lactate shuttle, supplying neurons with energy. Additionally, AQP9 is permeable to arsenite, contributing to arsenic excretion by the liver and providing partial protection against arsenic toxicity. It is also permeable to H2O2 in vivo. Could also be permeable to ammonium. In Mus musculus (Mouse), this protein is Aquaporin-9.